A 118-amino-acid chain; its full sequence is UPF0295 protein BCE_0593 (118 aa).

The next 2 helical transmembrane spans lie at 12-32 (IRTF…LGVF) and 43-63 (FMMV…WIGM).

This sequence belongs to the UPF0295 family.

It is found in the cell membrane. The protein is UPF0295 protein BCE_0593 of Bacillus cereus (strain ATCC 10987 / NRS 248).